We begin with the raw amino-acid sequence, 621 residues long: Complex I assembly factor ACAD9, mitochondrial (621 aa).

A mitochondrion-targeting transit peptide spans 1-37; the sequence is MSGCGLFLRTTAAARACRGLVVSTANRRLLRTSPPVR. Lys41 carries the N6-acetyllysine modification. Position 92 is an N6-succinyllysine (Lys92). Glu426 serves as the catalytic Proton acceptor. Thr478 is modified (phosphothreonine). At Lys521 the chain carries N6-acetyllysine; alternate. Residue Lys521 is modified to N6-succinyllysine; alternate.

The protein belongs to the acyl-CoA dehydrogenase family. Homodimer. Interacts with NDUFAF1 and ECSIT. Part of the mitochondrial complex I assembly/MCIA complex that comprises at least the core subunits TMEM126B, NDUFAF1, ECSIT and ACAD9 and complement subunits such as COA1 and TMEM186. Interacts with TMEM70 and TMEM242. FAD is required as a cofactor. As to expression, ubiquitously expressed in most normal human tissues and cancer cell lines with high level of expression in heart, skeletal muscles, brain, kidney and liver. In the cerebellum uniquely expressed in the granular layer (at protein level).

Its subcellular location is the mitochondrion inner membrane. It carries out the reaction eicosanoyl-CoA + oxidized [electron-transfer flavoprotein] + H(+) = (2E)-eicosenoyl-CoA + reduced [electron-transfer flavoprotein]. It catalyses the reaction octadecanoyl-CoA + oxidized [electron-transfer flavoprotein] + H(+) = (2E)-octadecenoyl-CoA + reduced [electron-transfer flavoprotein]. The catalysed reaction is oxidized [electron-transfer flavoprotein] + hexadecanoyl-CoA + H(+) = (2E)-hexadecenoyl-CoA + reduced [electron-transfer flavoprotein]. The enzyme catalyses decanoyl-CoA + oxidized [electron-transfer flavoprotein] + H(+) = (2E)-decenoyl-CoA + reduced [electron-transfer flavoprotein]. It carries out the reaction nonanoyl-CoA + oxidized [electron-transfer flavoprotein] + H(+) = (2E)-nonenoyl-CoA + reduced [electron-transfer flavoprotein]. It catalyses the reaction pentadecanoyl-CoA + oxidized [electron-transfer flavoprotein] + H(+) = (2E)-pentadecenoyl-CoA + reduced [electron-transfer flavoprotein]. The catalysed reaction is undecanoyl-CoA + oxidized [electron-transfer flavoprotein] + H(+) = trans-2-undecenoyl-CoA + reduced [electron-transfer flavoprotein]. The enzyme catalyses (9Z)-hexadecenoyl-CoA + oxidized [electron-transfer flavoprotein] + H(+) = (2E,9Z)-hexadecadienoyl-CoA + reduced [electron-transfer flavoprotein]. It carries out the reaction heptadecanoyl-CoA + oxidized [electron-transfer flavoprotein] + H(+) = trans-2-heptadecenoyl-CoA + reduced [electron-transfer flavoprotein]. It catalyses the reaction (9E)-octadecenoyl-CoA + oxidized [electron-transfer flavoprotein] + H(+) = (2E,9E)-octadecadienoyl-CoA + reduced [electron-transfer flavoprotein]. The catalysed reaction is oxidized [electron-transfer flavoprotein] + (9Z)-octadecenoyl-CoA + H(+) = (2E,9Z)-octadecadienoyl-CoA + reduced [electron-transfer flavoprotein]. The enzyme catalyses (9Z,12Z)-octadecadienoyl-CoA + oxidized [electron-transfer flavoprotein] + H(+) = (2E,9Z,12Z)-octadecatrienoyl-CoA + reduced [electron-transfer flavoprotein]. It carries out the reaction (4Z,7Z,10Z,13Z,16Z,19Z)-docosahexaenoyl-CoA + oxidized [electron-transfer flavoprotein] + H(+) = (2E,4Z,7Z,10Z,13Z,16Z,19Z)-docosaheptaenoyl-CoA + reduced [electron-transfer flavoprotein]. It catalyses the reaction tetradecanoyl-CoA + oxidized [electron-transfer flavoprotein] + H(+) = (2E)-tetradecenoyl-CoA + reduced [electron-transfer flavoprotein]. In terms of biological role, as part of the MCIA complex, primarily participates in the assembly of the mitochondrial complex I and therefore plays a role in oxidative phosphorylation. This moonlighting protein also has a dehydrogenase activity toward a broad range of substrates with greater specificity for long-chain unsaturated acyl-CoAs. However, in vivo, it does not seem to play a primary role in fatty acid oxidation. In addition, the function in complex I assembly is independent of the dehydrogenase activity of the protein. This is Complex I assembly factor ACAD9, mitochondrial from Homo sapiens (Human).